The sequence spans 371 residues: Phosphate acyltransferase (371 aa).

It belongs to the PlsX family. As to quaternary structure, homodimer. Probably interacts with PlsY.

The protein resides in the cytoplasm. The enzyme catalyses a fatty acyl-[ACP] + phosphate = an acyl phosphate + holo-[ACP]. It participates in lipid metabolism; phospholipid metabolism. Functionally, catalyzes the reversible formation of acyl-phosphate (acyl-PO(4)) from acyl-[acyl-carrier-protein] (acyl-ACP). This enzyme utilizes acyl-ACP as fatty acyl donor, but not acyl-CoA. This is Phosphate acyltransferase from Ruegeria pomeroyi (strain ATCC 700808 / DSM 15171 / DSS-3) (Silicibacter pomeroyi).